We begin with the raw amino-acid sequence, 436 residues long: 3-ketoacyl-CoA thiolase (436 aa).

Cys99 functions as the Acyl-thioester intermediate in the catalytic mechanism. Catalysis depends on proton acceptor residues His392 and Cys422.

It belongs to the thiolase-like superfamily. Thiolase family. Heterotetramer of two alpha chains (FadJ) and two beta chains (FadI).

It localises to the cytoplasm. The enzyme catalyses an acyl-CoA + acetyl-CoA = a 3-oxoacyl-CoA + CoA. It participates in lipid metabolism; fatty acid beta-oxidation. Functionally, catalyzes the final step of fatty acid oxidation in which acetyl-CoA is released and the CoA ester of a fatty acid two carbons shorter is formed. This chain is 3-ketoacyl-CoA thiolase, found in Shewanella sp. (strain ANA-3).